We begin with the raw amino-acid sequence, 65 residues long: Carboxypeptidase A inhibitor (65 aa).

The protein belongs to the protease inhibitor I44 family.

Its subcellular location is the secreted. In terms of biological role, inhibits carboxypeptidase A. The sequence is that of Carboxypeptidase A inhibitor from Ascaris suum (Pig roundworm).